The sequence spans 125 residues: MKPNYNVDRAPKRSDEPVWWSLFGAGGTWFAMITPVTVLVLGILVPMGVINAEALSYDRVVSFATSIIGALFIIATLALPMWHAMHRVHHGMHDLKFHTGVVGKIACYAIAGLISALAVVFIFML.

3 consecutive transmembrane segments (helical) span residues 30–50, 60–80, and 105–125; these read FAMITPVTVLVLGILVPMGVI, VVSFATSIIGALFIIATLALP, and IACYAIAGLISALAVVFIFML.

This sequence belongs to the FrdD family. Part of an enzyme complex containing four subunits: a flavoprotein (FrdA), an iron-sulfur protein (FrdB), and two hydrophobic anchor proteins (FrdC and FrdD).

It is found in the cell inner membrane. In terms of biological role, anchors the catalytic components of the fumarate reductase complex to the cell membrane, binds quinones. The polypeptide is Fumarate reductase subunit D (Vibrio vulnificus (strain YJ016)).